The primary structure comprises 239 residues: Small ribosomal subunit protein uS3c (239 aa).

The KH type-2 domain maps to 43–139 (IKNYIQKNRK…RLNISIEKVK (97 aa)). The tract at residues 50-80 (NRKKGSNRKIESDSSSEVITHNRKTDSGSSS) is disordered.

Belongs to the universal ribosomal protein uS3 family. Part of the 30S ribosomal subunit.

It localises to the plastid. Its subcellular location is the chloroplast. The protein is Small ribosomal subunit protein uS3c (rps3) of Agrostis stolonifera (Creeping bentgrass).